Consider the following 239-residue polypeptide: Large ribosomal subunit protein uL3 (239 aa).

The residue at position 151 (Q151) is an N5-methylglutamine.

Belongs to the universal ribosomal protein uL3 family. Part of the 50S ribosomal subunit. Forms a cluster with proteins L14 and L19. Post-translationally, methylated by PrmB.

One of the primary rRNA binding proteins, it binds directly near the 3'-end of the 23S rRNA, where it nucleates assembly of the 50S subunit. This chain is Large ribosomal subunit protein uL3, found in Ruegeria sp. (strain TM1040) (Silicibacter sp.).